A 273-amino-acid polypeptide reads, in one-letter code: Large ribosomal subunit protein uL2 (273 aa).

Disordered regions lie at residues 30 to 50 (YAPLLDTKSKTGGRNNFGRIT) and 221 to 273 (RGTA…RRGK). Positions 253 to 273 (KGKKTRHNKRTDKFIVRRRGK) are enriched in basic residues.

Belongs to the universal ribosomal protein uL2 family. In terms of assembly, part of the 50S ribosomal subunit. Forms a bridge to the 30S subunit in the 70S ribosome.

One of the primary rRNA binding proteins. Required for association of the 30S and 50S subunits to form the 70S ribosome, for tRNA binding and peptide bond formation. It has been suggested to have peptidyltransferase activity; this is somewhat controversial. Makes several contacts with the 16S rRNA in the 70S ribosome. In Pasteurella multocida (strain Pm70), this protein is Large ribosomal subunit protein uL2.